The chain runs to 37 residues: Potassium channel toxin alpha-KTx 3.9 (37 aa).

Intrachain disulfides connect Cys-7–Cys-27, Cys-13–Cys-32, and Cys-17–Cys-34. The interval 25–32 (GKCMNRKC) is interaction with Ca(2+)-activated K(+) channels.

The protein belongs to the short scorpion toxin superfamily. Potassium channel inhibitor family. Alpha-KTx 03 subfamily. In terms of tissue distribution, expressed by the venom gland.

It localises to the secreted. Functionally, binds and inhibits potassium channels. Intracerebroventricular injection into mice induces paralyzing symptoms followed by death. Its binding affinity to rat brain synaptosomes is 5-fold lower than this of KTX 1. This is Potassium channel toxin alpha-KTx 3.9 (KTX3) from Buthus occitanus tunetanus (Common European scorpion).